The following is a 285-amino-acid chain: Prephenate dehydratase (285 aa).

The Prephenate dehydratase domain occupies Lys2 to Pro183. The ACT domain maps to Met204 to Gln281.

It catalyses the reaction prephenate + H(+) = 3-phenylpyruvate + CO2 + H2O. It functions in the pathway amino-acid biosynthesis; L-phenylalanine biosynthesis; phenylpyruvate from prephenate: step 1/1. This chain is Prephenate dehydratase (pheA), found in Bacillus subtilis (strain 168).